Reading from the N-terminus, the 89-residue chain is Small ribosomal subunit protein uS15 (89 aa).

This sequence belongs to the universal ribosomal protein uS15 family. As to quaternary structure, part of the 30S ribosomal subunit. Forms a bridge to the 50S subunit in the 70S ribosome, contacting the 23S rRNA.

In terms of biological role, one of the primary rRNA binding proteins, it binds directly to 16S rRNA where it helps nucleate assembly of the platform of the 30S subunit by binding and bridging several RNA helices of the 16S rRNA. Functionally, forms an intersubunit bridge (bridge B4) with the 23S rRNA of the 50S subunit in the ribosome. This is Small ribosomal subunit protein uS15 from Rhizorhabdus wittichii (strain DSM 6014 / CCUG 31198 / JCM 15750 / NBRC 105917 / EY 4224 / RW1) (Sphingomonas wittichii).